We begin with the raw amino-acid sequence, 309 residues long: THAP domain-containing protein 7 (309 aa).

The segment at methionine 1 to phenylalanine 93 adopts a THAP-type zinc-finger fold. The interval threonine 158 to valine 209 is disordered. Phosphoserine is present on serine 162. The span at glutamate 198–valine 209 shows a compositional bias: pro residues. Serine 210 is modified (phosphoserine). Positions glutamate 229–tyrosine 232 match the HCFC1-binding motif (HBM) motif.

As to quaternary structure, forms homodimers. Interacts with HDAC3 and nuclear hormone receptor corepressors. Interacts via HBM with HCFC1.

The protein resides in the nucleus. It is found in the chromosome. Chromatin-associated, histone tail-binding protein that represses transcription via recruitment of HDAC3 and nuclear hormone receptor corepressors. The chain is THAP domain-containing protein 7 (THAP7) from Homo sapiens (Human).